A 1550-amino-acid polypeptide reads, in one-letter code: Cellulose synthase 1 (1550 aa).

A catalytic region spans residues 1–741; it reads MPEVRSSTQS…KERVLKGTVK (741 aa). 3 helical membrane passes run 26–46, 47–67, and 106–126; these read GAGL…TSVT, LPPE…FIVG, and GLLG…LFLS. Residues 147–240 are catalytic subdomain A; sequence EWPTVDIFVP…YILIFDCDHV (94 aa). The active site involves Asp189. Residues Asp236 and Asp238 each contribute to the substrate site. The tract at residues 317–377 is catalytic subdomain B; sequence TAIEQIGGFA…GQRVRWARGM (61 aa). The active site involves Asp333. 5 consecutive transmembrane segments (helical) span residues 398-418, 423-443, 468-488, 507-527, and 547-567; these read LCYL…IFLS, FLFF…AYAI, VYET…LLSP, FDLG…GGLA, and LLNS…IAVG. The 76-residue stretch at 572-647 folds into the PilZ domain; sequence QKRNSHRIPA…PARIIRAGNG (76 aa). 2 disordered regions span residues 708 to 731 and 768 to 813; these read VHRS…NPSR and APAH…QPLA. The interval 742-1550 is cyclic di-GMP binding domain; the sequence is MVSLLALLTF…KQLEDERRKS (809 aa). A compositionally biased stretch (low complexity) spans 768–796; the sequence is APAHQPEASDLPPLPALLPATSGAAQAGS. Residues 1513–1533 traverse the membrane as a helical segment; sequence VLLVGLLGCILIVSVLARALA.

This sequence in the N-terminal section; belongs to the glycosyltransferase 2 family. It in the C-terminal section; belongs to the AcsB/BcsB family. The cofactor is Mg(2+).

Its subcellular location is the cell inner membrane. It catalyses the reaction [(1-&gt;4)-beta-D-glucosyl](n) + UDP-alpha-D-glucose = [(1-&gt;4)-beta-D-glucosyl](n+1) + UDP + H(+). It participates in glycan metabolism; bacterial cellulose biosynthesis. Functionally, bifunctional protein comprised of a catalytic subunit and a regulatory subunit. The catalytic subunit of cellulose synthase polymerizes uridine 5'-diphosphate glucose to cellulose in a processive way. The thick cellulosic mats generated by this enzyme probably provide a specialized protective environment to the bacterium. The regulatory subunit binds bis-(3'-5') cyclic diguanylic acid (c-di-GMP). This chain is Cellulose synthase 1 (acsAB), found in Novacetimonas hansenii (Komagataeibacter hansenii).